Consider the following 497-residue polypeptide: Reticulophagy regulator 1 (497 aa).

Positions 1 to 51 are disordered; the sequence is MASPAPPEHAEEGCPAPAAEEQAPPSPPPPQASPAERQQQEEEAQEAGAAE. Topologically, residues 1-59 are cytoplasmic; sequence MASPAPPEHAEEGCPAPAAEEQAPPSPPPPQASPAERQQQEEEAQEAGAAEGAGLQVEE. A compositionally biased stretch (low complexity) spans 13–23; that stretch reads GCPAPAAEEQA. A helical membrane pass occupies residues 60–80; the sequence is AAGRAAAAVTWLLGEPVLWLG. Residues 81–95 lie on the Lumenal side of the membrane; it reads CRADELLSWKRPLRS. The reticulon homology domain stretch occupies residues 84 to 233; the sequence is DELLSWKRPL…LLCAFLCPLF (150 aa). Residues 96 to 116 form a helical membrane-spanning segment; it reads LLGFVAANLLFWFLALTPWRV. At 117–118 the chain is on the cytoplasmic side; that stretch reads YH. Residues 119 to 139 traverse the membrane as a helical segment; the sequence is LISVMILGRVIMQIIKDMVLS. At 140–208 the chain is on the lumenal side; the sequence is RTRGAQLWRS…LVCSVCTFFT (69 aa). The residue at position 149 (serine 149) is a Phosphoserine. Serine 151 is subject to Phosphoserine; by CAMK2B. Serine 153 carries the post-translational modification Phosphoserine. The chain crosses the membrane as a helical span at residues 209 to 229; sequence ILGSYIPGVILSYLLLLCAFL. The Cytoplasmic segment spans residues 230-497; it reads CPLFKCNDIG…GFLSNLLGGH (268 aa). A compositionally biased stretch (polar residues) spans 319-330; the sequence is FNLSEGYTPQTD. 4 disordered regions span residues 319 to 365, 377 to 396, 436 to 455, and 468 to 497; these read FNLS…EDEL, KEQL…AAGL, LSQA…GDDF, and SELG…LGGH. Basic and acidic residues-rich tracts occupy residues 334-348 and 377-388; these read DLDR…RDLS and KEQLDSGHRPSK. Over residues 443–455 the composition is skewed to acidic residues; sequence PEEDTDTEEGDDF. The short motif at 453 to 458 is the LIR motif element; the sequence is DDFELL. The segment covering 471 to 490 has biased composition (polar residues); the sequence is GLTQDQEAEAQQNKKSSGFL.

Belongs to the RETREG family. In terms of assembly, homooligomer; oligomerization is enhanced following endoplasmic reticulum stress and is mediated by the reticulon homology domain. Interacts with ATG8 family modifier proteins MAP1LC3A, MAP1LC3B, MAP1LC3C, GABARAP, GABARAPL1 and GABARAPL2. Shows higher affinity for GABARAPL1 than for MAP1LC3A or MAP1LC3B. Phosphorylation at Ser-151 by CAMK2B enhances oligomerization and membrane scission and reticulophagy activity. As to expression, overexpressed in esophageal squamous cell carcinoma.

It is found in the golgi apparatus. Its subcellular location is the cis-Golgi network membrane. The protein localises to the endoplasmic reticulum membrane. Its function is as follows. Endoplasmic reticulum (ER)-anchored autophagy regulator which mediates ER delivery into lysosomes through sequestration into autophagosomes. Promotes membrane remodeling and ER scission via its membrane bending capacity and targets the fragments into autophagosomes via interaction with ATG8 family proteins. Active under basal conditions. Required for collagen quality control in a LIR motif-dependent manner. Required for long-term survival of nociceptive and autonomic ganglion neurons. In terms of biological role, (Microbial infection) During SARS-CoV-2 infection, RETREG1-mediated reticulophagy is promoted by SARS-CoV-2 ORF3A protein. This induces endoplasmic reticulum stress and inflammatory responses and facilitates viral infection. The polypeptide is Reticulophagy regulator 1 (Homo sapiens (Human)).